The following is a 276-amino-acid chain: Formamidopyrimidine-DNA glycosylase (276 aa).

Proline 2 functions as the Schiff-base intermediate with DNA in the catalytic mechanism. Glutamate 3 acts as the Proton donor in catalysis. Lysine 58 serves as the catalytic Proton donor; for beta-elimination activity. Residues histidine 94, arginine 112, and arginine 157 each coordinate DNA. An FPG-type zinc finger spans residues 242–276 (FVYDRAGLPCRVCGTPIKQIVQGQRSTYFCPTCQR). Arginine 266 acts as the Proton donor; for delta-elimination activity in catalysis.

The protein belongs to the FPG family. As to quaternary structure, monomer. Zn(2+) serves as cofactor.

It carries out the reaction Hydrolysis of DNA containing ring-opened 7-methylguanine residues, releasing 2,6-diamino-4-hydroxy-5-(N-methyl)formamidopyrimidine.. The enzyme catalyses 2'-deoxyribonucleotide-(2'-deoxyribose 5'-phosphate)-2'-deoxyribonucleotide-DNA = a 3'-end 2'-deoxyribonucleotide-(2,3-dehydro-2,3-deoxyribose 5'-phosphate)-DNA + a 5'-end 5'-phospho-2'-deoxyribonucleoside-DNA + H(+). Its function is as follows. Involved in base excision repair of DNA damaged by oxidation or by mutagenic agents. Acts as a DNA glycosylase that recognizes and removes damaged bases. Has a preference for oxidized purines, such as 7,8-dihydro-8-oxoguanine (8-oxoG). Has AP (apurinic/apyrimidinic) lyase activity and introduces nicks in the DNA strand. Cleaves the DNA backbone by beta-delta elimination to generate a single-strand break at the site of the removed base with both 3'- and 5'-phosphates. The chain is Formamidopyrimidine-DNA glycosylase from Paraburkholderia phytofirmans (strain DSM 17436 / LMG 22146 / PsJN) (Burkholderia phytofirmans).